The sequence spans 488 residues: Inositol 1,3,4-trisphosphate 5/6-kinase 4 (488 aa).

Residues Lys-208 and Lys-224 each contribute to the 1D-myo-inositol 1,3,4-trisphosphate site. In terms of domain architecture, ATP-grasp spans 246–488 (NACAIVDPIR…RFDQHVQEKH (243 aa)). Positions 263 and 315 each coordinate ATP. 1D-myo-inositol 1,3,4-trisphosphate contacts are provided by His-326 and Lys-360. ATP contacts are provided by residues 349–360 (QEYVDHSSRIFK), Ser-375, and Ser-398. Residues Asp-439, Asp-453, and Asn-455 each coordinate Mg(2+). Residues Asn-455 and Ser-459 each coordinate 1D-myo-inositol 1,3,4-trisphosphate.

The protein belongs to the ITPK1 family. As to quaternary structure, monomer. Requires Mg(2+) as cofactor. As to expression, expressed in roots, leaf vasculature, cauline leaves, flower buds and siliques.

It carries out the reaction 1D-myo-inositol 1,3,4-trisphosphate + ATP = 1D-myo-inositol 1,3,4,5-tetrakisphosphate + ADP + H(+). The catalysed reaction is 1D-myo-inositol 1,3,4-trisphosphate + ATP = 1D-myo-inositol 1,3,4,6-tetrakisphosphate + ADP + H(+). Its function is as follows. Kinase that can phosphorylate the inositol polyphosphate Ins(1,3,4)P3 to form InsP4. Also phosphorylates a racemic mixture of Ins(1,4,6)P3 and Ins(3,4,6)P3 to form InsP4. Does not display inositol 3,4,5,6-tetrakisphosphate 1-kinase activity, but possesses inositol 1,4,5,6-tetrakisphosphate and inositol 1,3,4,5-tetrakisphosphate isomerase activity. Ins(1,3,4,6)P4 is an essential molecule in the hexakisphosphate (InsP6) pathway. The sequence is that of Inositol 1,3,4-trisphosphate 5/6-kinase 4 (ITPK4) from Arabidopsis thaliana (Mouse-ear cress).